A 177-amino-acid chain; its full sequence is ATP synthase subunit delta (177 aa).

This sequence belongs to the ATPase delta chain family. F-type ATPases have 2 components, F(1) - the catalytic core - and F(0) - the membrane proton channel. F(1) has five subunits: alpha(3), beta(3), gamma(1), delta(1), epsilon(1). F(0) has three main subunits: a(1), b(2) and c(10-14). The alpha and beta chains form an alternating ring which encloses part of the gamma chain. F(1) is attached to F(0) by a central stalk formed by the gamma and epsilon chains, while a peripheral stalk is formed by the delta and b chains.

Its subcellular location is the cell inner membrane. Its function is as follows. F(1)F(0) ATP synthase produces ATP from ADP in the presence of a proton or sodium gradient. F-type ATPases consist of two structural domains, F(1) containing the extramembraneous catalytic core and F(0) containing the membrane proton channel, linked together by a central stalk and a peripheral stalk. During catalysis, ATP synthesis in the catalytic domain of F(1) is coupled via a rotary mechanism of the central stalk subunits to proton translocation. In terms of biological role, this protein is part of the stalk that links CF(0) to CF(1). It either transmits conformational changes from CF(0) to CF(1) or is implicated in proton conduction. This is ATP synthase subunit delta from Azobacteroides pseudotrichonymphae genomovar. CFP2.